Reading from the N-terminus, the 33-residue chain is Beta-amanitin proprotein (33 aa).

Positions M1 to P10 are excised as a propeptide. The segment at residues I11–P18 is a cross-link (cyclopeptide (Ile-Pro)). A cross-link (2'-cysteinyl-6'-hydroxytryptophan sulfoxide (Trp-Cys)) is located at residues W12–C16. A propeptide spanning residues C19–A33 is cleaved from the precursor.

Belongs to the MSDIN fungal toxin family. Processed by the macrocyclase-peptidase enzyme POPB to yield a toxic cyclic decapeptide. POPB first removes 10 residues from the N-terminus. Conformational trapping of the remaining peptide forces the enzyme to release this intermediate rather than proceed to macrocyclization. The enzyme rebinds the remaining peptide in a different conformation and catalyzes macrocyclization of the N-terminal 8 residues.

Functionally, toxin belonging to the bicyclic octapeptides amatoxins that acts by binding non-competitively to RNA polymerase II and greatly slowing the elongation of transcripts from target promoters. The polypeptide is Beta-amanitin proprotein (Amanita pallidorosea).